Reading from the N-terminus, the 199-residue chain is Large ribosomal subunit protein bL25 (199 aa).

This sequence belongs to the bacterial ribosomal protein bL25 family. CTC subfamily. As to quaternary structure, part of the 50S ribosomal subunit; part of the 5S rRNA/L5/L18/L25 subcomplex. Contacts the 5S rRNA. Binds to the 5S rRNA independently of L5 and L18.

Functionally, this is one of the proteins that binds to the 5S RNA in the ribosome where it forms part of the central protuberance. The chain is Large ribosomal subunit protein bL25 from Caldanaerobacter subterraneus subsp. tengcongensis (strain DSM 15242 / JCM 11007 / NBRC 100824 / MB4) (Thermoanaerobacter tengcongensis).